We begin with the raw amino-acid sequence, 825 residues long: Protein SEY1 homolog 2 (825 aa).

A disordered region spans residues 1–21; sequence MDEVSPTKHFTSKPLLPTKTP. Residues 1 to 728 lie on the Cytoplasmic side of the membrane; that stretch reads MDEVSPTKHF…EKENSEIKYQ (728 aa). Positions 83-305 constitute a GB1/RHD3-type G domain; the sequence is GMDYNAVGIL…FLPQYNKEIP (223 aa). 93-100 is a GTP binding site; it reads GAQSSGKS. Residues 373–397 are a coiled coil; that stretch reads KVFTKQIDAALERYKEVTERYMETI. Residues 729–749 traverse the membrane as a helical segment; the sequence is IPLYLIVLVVFFGFDEFIAIL. Over 750–752 the chain is Lumenal; it reads TNP. A helical membrane pass occupies residues 753-773; it reads LLFILTLIIGGGVYIGYKLNL. The Cytoplasmic segment spans residues 774–825; sequence GGVAKNYIQYLLSMSLSSTMEYLRTIPFFTPLIDKVWPKDDNNTEETQEEIK.

This sequence belongs to the TRAFAC class dynamin-like GTPase superfamily. GB1/RHD3 GTPase family. RHD3 subfamily.

It is found in the endoplasmic reticulum membrane. Probable GTP-binding protein that may be involved in cell development. The polypeptide is Protein SEY1 homolog 2 (Entamoeba histolytica (strain ATCC 30459 / HM-1:IMSS / ABRM)).